The chain runs to 187 residues: Ribosome-recycling factor (187 aa).

Belongs to the RRF family.

The protein localises to the cytoplasm. Responsible for the release of ribosomes from messenger RNA at the termination of protein biosynthesis. May increase the efficiency of translation by recycling ribosomes from one round of translation to another. This Lactiplantibacillus plantarum (strain ATCC BAA-793 / NCIMB 8826 / WCFS1) (Lactobacillus plantarum) protein is Ribosome-recycling factor.